Reading from the N-terminus, the 157-residue chain is ENGEVDLDIQEVIMHPNYSKSSSDNDIALLRLARPATFSQTIVPICLPDSGLSERELTQAGQETVVTGWGYRSETKRNRTFVLNFIKVPVVPHSECVRTMHNLVSENMLCAGILGDTRDACEGDSGGPMVASFRGTWFLVGLVSWGEGCGRLHNYGV.

The Peptidase S1 domain maps to 1–157; the sequence is ENGEVDLDIQ…GCGRLHNYGV (157 aa). The N-linked (GlcNAc...) asparagine glycan is linked to Asn17. Catalysis depends on Asp26, which acts as the Charge relay system. Asn78 carries an N-linked (GlcNAc...) asparagine glycan. 2 disulfides stabilise this stretch: Cys96–Cys110 and Cys121–Cys149. Ser125 serves as the catalytic Charge relay system.

Belongs to the peptidase S1 family. In terms of tissue distribution, plasma; synthesized in the liver.

Its subcellular location is the secreted. The protein localises to the golgi apparatus. The protein resides in the endoplasmic reticulum. It carries out the reaction Degradation of blood coagulation factors Va and VIIIa.. Functionally, protein C is a vitamin K-dependent serine protease that regulates blood coagulation by inactivating factors Va and VIIIa in the presence of calcium ions and phospholipids. Exerts a protective effect on the endothelial cell barrier function. The protein is Vitamin K-dependent protein C (PROC) of Equus caballus (Horse).